A 359-amino-acid chain; its full sequence is Nicotinate-nucleotide--dimethylbenzimidazole phosphoribosyltransferase (359 aa).

Glu318 (proton acceptor) is an active-site residue.

This sequence belongs to the CobT family. As to quaternary structure, homodimer.

The catalysed reaction is 5,6-dimethylbenzimidazole + nicotinate beta-D-ribonucleotide = alpha-ribazole 5'-phosphate + nicotinate + H(+). It participates in nucleoside biosynthesis; alpha-ribazole biosynthesis; alpha-ribazole from 5,6-dimethylbenzimidazole: step 1/2. Functionally, catalyzes the synthesis of alpha-ribazole-5'-phosphate from nicotinate mononucleotide (NAMN) and 5,6-dimethylbenzimidazole (DMB). This is Nicotinate-nucleotide--dimethylbenzimidazole phosphoribosyltransferase from Shigella sonnei (strain Ss046).